Reading from the N-terminus, the 93-residue chain is Protein VNG_0358C (93 aa).

In Halobacterium salinarum (strain ATCC 700922 / JCM 11081 / NRC-1) (Halobacterium halobium), this protein is Protein VNG_0358C.